Reading from the N-terminus, the 306-residue chain is Recombination-associated protein RdgC (306 aa).

This sequence belongs to the RdgC family.

The protein localises to the cytoplasm. It is found in the nucleoid. May be involved in recombination. The chain is Recombination-associated protein RdgC from Pseudomonas aeruginosa (strain ATCC 15692 / DSM 22644 / CIP 104116 / JCM 14847 / LMG 12228 / 1C / PRS 101 / PAO1).